A 1172-amino-acid polypeptide reads, in one-letter code: MAERVKILKPGLTNRSRSASIDMIVMDEIAKNNPIYTNDNSNNNNNDETSSNISGSNSIQNLSLNNLNNLSGGGGGSNSNSVNNTISERNPDSPRFRSNTGNLQTMMMVSNGNIIGSIQSPSPPISPRAQMTAPNLSKFLDQHTPPPSPKPEHLSGHLRIQQQHHSGIYRNLSFSSVNSSTSFGDFKRSTNLFQPPQSQSQQQQQLQLQQQQQQSMPNLSLGNNINSNNNNNNGSENNDISMEIKDNTSGIDTSVKSFSPRKKRKKENKIIRRIRRWMTWVISSNIWLTIMIISIIFVLFIDDIIGASGSPSSNAIDYSIMAVKCSIIGFFSIDIILNLFCFQQEYFPGTIVFWLDLISLISIVTDIHHFQNYYANLVLSITVNTRIIRICGSFIRISLISTLYNRFLRKQTLPSEGLEVEASKLGDKLIRLTTNKIVLLALAVLFATQLLVYESDTPTQYIQSTISSFEYLSSTYGLQSPEFTGVFNNYQLNNEKLLFTQISNQKIFNLPDKINSLQERSILKYNYLNSIIWIDNSYYIKYSCILHLCLTVFVILVLITINLLIVNDAHWLVINPLENVLTIVKLLSKQNSMIKQGGGGSGIVGGFSNNTINSNSNLNSNSNLNSNSNSNLVRNRVESIGNKSDTADTTSSSGIDNEEPDEADFLLGMLNEIDDSLQAAKEKVEEESIQNSILKKDIEDLYVEKYILQVHLRSIVRKINFHDPIGHYLKNRQLLLMQSNATFNTLEQDSEDDIRFKLNDDGLPDLNVIQYATIDKLIEKLTMAEAHDLKFANVFLLTYRKFLSPVELMERLTIRFCVTPTMELPEKLLASKEQVEQWRKTKQEQIRTSVFNTIKLWIGIYNWDFYENPDLYELFNNLVNKIMPFCKMEKHATYIDSIHKRKMATYIQDPPYIPIEPLTQEEIAETMVLEDRLLFNFDISDIAIQITLMEFDLFKNIKSKEFLNLAWTHKTEKTRLSPNIVRFIEHFNSVSFWLQTCIVKSGKIKERVAVLKKVIALADVFVQLNNYYGAMEVLSSLESSAVSRLHKTWEQVPQSSIQSLQSLQKLLSPQENFKNYRERISKCGSCCIPYIGLYLSDLTFIHEGNPDYYQQSQLINFSKLREVAITINTIKQFQNIFYYYEKNQNIRSQMNFKSPGADIIWKMSLSCEQRNK.

Composition is skewed to low complexity over residues 34–70 (PIYTNDNSNNNNNDETSSNISGSNSIQNLSLNNLNNL) and 78–87 (NSNSVNNTIS). Disordered stretches follow at residues 34–100 (PIYT…RSNT), 138–162 (KFLDQHTPPPSPKPEHLSGHLRIQQ), and 186–246 (FKRS…EIKD). Residues 194–241 (QPPQSQSQQQQQLQLQQQQQQSMPNLSLGNNINSNNNNNNGSENNDIS) are compositionally biased toward low complexity. The next 6 helical transmembrane spans lie at 286–306 (IWLTIMIISIIFVLFIDDIIG), 320–340 (IMAVKCSIIGFFSIDIILNLF), 347–367 (FPGTIVFWLDLISLISIVTDI), 378–400 (VLSITVNTRIIRICGSFIRISLI), 432–452 (LTTNKIVLLALAVLFATQLLV), and 545–565 (ILHLCLTVFVILVLITINLLI). Positions 666 to 702 (LLGMLNEIDDSLQAAKEKVEEESIQNSILKKDIEDLY) form a coiled coil. The 139-residue stretch at 765 to 903 (DLNVIQYATI…YIDSIHKRKM (139 aa)) folds into the N-terminal Ras-GEF domain. Residues 938-1170 (DISDIAIQIT…WKMSLSCEQR (233 aa)) enclose the Ras-GEF domain.

It is found in the membrane. Its function is as follows. Promotes the exchange of Ras-bound GDP by GTP. This chain is Ras guanine nucleotide exchange factor W (gefW), found in Dictyostelium discoideum (Social amoeba).